The primary structure comprises 395 residues: Succinyl-diaminopimelate desuccinylase (395 aa).

H74 is a binding site for Zn(2+). Residue D76 is part of the active site. A Zn(2+)-binding site is contributed by D107. E141 serves as the catalytic Proton acceptor. 3 residues coordinate Zn(2+): E142, E170, and H368.

Belongs to the peptidase M20A family. DapE subfamily. As to quaternary structure, homodimer. Zn(2+) is required as a cofactor. Co(2+) serves as cofactor.

It catalyses the reaction N-succinyl-(2S,6S)-2,6-diaminopimelate + H2O = (2S,6S)-2,6-diaminopimelate + succinate. It functions in the pathway amino-acid biosynthesis; L-lysine biosynthesis via DAP pathway; LL-2,6-diaminopimelate from (S)-tetrahydrodipicolinate (succinylase route): step 3/3. Catalyzes the hydrolysis of N-succinyl-L,L-diaminopimelic acid (SDAP), forming succinate and LL-2,6-diaminopimelate (DAP), an intermediate involved in the bacterial biosynthesis of lysine and meso-diaminopimelic acid, an essential component of bacterial cell walls. This is Succinyl-diaminopimelate desuccinylase from Brucella anthropi (strain ATCC 49188 / DSM 6882 / CCUG 24695 / JCM 21032 / LMG 3331 / NBRC 15819 / NCTC 12168 / Alc 37) (Ochrobactrum anthropi).